We begin with the raw amino-acid sequence, 326 residues long: Adenosine receptor A1 (326 aa).

The Extracellular segment spans residues 1–10; the sequence is MPHSVSAFQA. A helical transmembrane segment spans residues 11 to 33; sequence AYIGIEVLIALVSVPGNVLVIWA. Topologically, residues 34 to 46 are cytoplasmic; it reads VKVNQALRDATFC. The helical transmembrane segment at 47–69 threads the bilayer; that stretch reads FIASLAVADVAVGALVIPLAILI. Residues 70–80 are Extracellular-facing; the sequence is NIGPQTYFHTC. Cys-80 and Cys-169 are disulfide-bonded. Residues 81-102 traverse the membrane as a helical segment; that stretch reads LMVACPVLILTQSSILALLAIA. Over 103–123 the chain is Cytoplasmic; it reads VDRYLRVKIPLRYKTVVTPRR. A helical membrane pass occupies residues 124-146; that stretch reads AAVAIAGCWILSLVVGLTPMFGW. Over 147 to 176 the chain is Extracellular; the sequence is NNLSKIEMAWAANGSVGEPVIKCEFEKVIS. Asn-159 carries N-linked (GlcNAc...) asparagine glycosylation. Residues 177-201 traverse the membrane as a helical segment; that stretch reads MEYMVYFNFFVWVLPPLLLMVLIYL. Topologically, residues 202–235 are cytoplasmic; sequence EVFYLIRKQLSKKVSASSGDPQKYYGKELKIAKS. The helical transmembrane segment at 236 to 259 threads the bilayer; the sequence is LALILFLFALSWLPLHILNCITLF. The Extracellular segment spans residues 260–267; the sequence is CPTCHKPT. A helical membrane pass occupies residues 268-292; it reads ILTYIAIFLTHGNSAMNPIVYAFRI. At 293 to 326 the chain is on the cytoplasmic side; it reads QKFRVTFLKIWNDHFRCQPEPPIDEDLPEEKVDD. The S-palmitoyl cysteine moiety is linked to residue Cys-309.

It belongs to the G-protein coupled receptor 1 family.

It localises to the cell membrane. Its function is as follows. Receptor for adenosine. The activity of this receptor is mediated by G proteins which inhibit adenylyl cyclase. The chain is Adenosine receptor A1 (ADORA1) from Cavia porcellus (Guinea pig).